The chain runs to 233 residues: Aspartate/glutamate leucyltransferase (233 aa).

It belongs to the R-transferase family. Bpt subfamily.

It localises to the cytoplasm. It catalyses the reaction N-terminal L-glutamyl-[protein] + L-leucyl-tRNA(Leu) = N-terminal L-leucyl-L-glutamyl-[protein] + tRNA(Leu) + H(+). The catalysed reaction is N-terminal L-aspartyl-[protein] + L-leucyl-tRNA(Leu) = N-terminal L-leucyl-L-aspartyl-[protein] + tRNA(Leu) + H(+). Functionally, functions in the N-end rule pathway of protein degradation where it conjugates Leu from its aminoacyl-tRNA to the N-termini of proteins containing an N-terminal aspartate or glutamate. This Vibrio cholerae serotype O1 (strain ATCC 39315 / El Tor Inaba N16961) protein is Aspartate/glutamate leucyltransferase.